The following is a 396-amino-acid chain: Elongation factor Tu (396 aa).

A tr-type G domain is found at 10 to 206; the sequence is KPHCNIGTIG…AVDSYIPQPE (197 aa). The G1 stretch occupies residues 19 to 26; that stretch reads GHVDHGKT. Position 19–26 (19–26) interacts with GTP; sequence GHVDHGKT. Residue T26 coordinates Mg(2+). Positions 60–64 are G2; it reads GITIS. Residues 81-84 form a G3 region; it reads DCPG. GTP-binding positions include 81–85 and 136–139; these read DCPGH and NKCD. The G4 stretch occupies residues 136–139; the sequence is NKCD. The segment at 174–176 is G5; sequence SAL.

Belongs to the TRAFAC class translation factor GTPase superfamily. Classic translation factor GTPase family. EF-Tu/EF-1A subfamily. In terms of assembly, monomer.

The protein localises to the cytoplasm. It catalyses the reaction GTP + H2O = GDP + phosphate + H(+). GTP hydrolase that promotes the GTP-dependent binding of aminoacyl-tRNA to the A-site of ribosomes during protein biosynthesis. This is Elongation factor Tu from Rhodopseudomonas palustris (strain BisA53).